The following is a 272-amino-acid chain: 2-C-methyl-D-erythritol 4-phosphate cytidylyltransferase (272 aa).

Belongs to the IspD/TarI cytidylyltransferase family. IspD subfamily.

It catalyses the reaction 2-C-methyl-D-erythritol 4-phosphate + CTP + H(+) = 4-CDP-2-C-methyl-D-erythritol + diphosphate. It participates in isoprenoid biosynthesis; isopentenyl diphosphate biosynthesis via DXP pathway; isopentenyl diphosphate from 1-deoxy-D-xylulose 5-phosphate: step 2/6. In terms of biological role, catalyzes the formation of 4-diphosphocytidyl-2-C-methyl-D-erythritol from CTP and 2-C-methyl-D-erythritol 4-phosphate (MEP). This Xanthomonas oryzae pv. oryzae (strain PXO99A) protein is 2-C-methyl-D-erythritol 4-phosphate cytidylyltransferase.